A 33-amino-acid chain; its full sequence is Mu-theraphotoxin-Osp1b (33 aa).

Cystine bridges form between Cys2/Cys17, Cys9/Cys22, and Cys16/Cys29.

This sequence belongs to the neurotoxin 10 (Hwtx-1) family. 22 (Htx-4) subfamily. As to expression, expressed by the venom gland.

The protein localises to the secreted. Its function is as follows. Voltage-gated sodium channel Nav1.7/SCN9A inhibitor. The polypeptide is Mu-theraphotoxin-Osp1b (Orphnaecus sp. (strain Maanghit-Cave/Philippines) (Tarantula spider)).